The following is a 156-amino-acid chain: Small ribosomal subunit protein uS7 (156 aa).

It belongs to the universal ribosomal protein uS7 family. Part of the 30S ribosomal subunit. Contacts proteins S9 and S11.

One of the primary rRNA binding proteins, it binds directly to 16S rRNA where it nucleates assembly of the head domain of the 30S subunit. Is located at the subunit interface close to the decoding center, probably blocks exit of the E-site tRNA. The protein is Small ribosomal subunit protein uS7 of Aeromonas salmonicida (strain A449).